We begin with the raw amino-acid sequence, 417 residues long: Serine hydroxymethyltransferase (417 aa).

Residues Leu121 and 125–127 contribute to the (6S)-5,6,7,8-tetrahydrofolate site; that span reads GHL. The residue at position 229 (Lys229) is an N6-(pyridoxal phosphate)lysine. Residue 355–357 participates in (6S)-5,6,7,8-tetrahydrofolate binding; the sequence is SPF.

This sequence belongs to the SHMT family. As to quaternary structure, homodimer. It depends on pyridoxal 5'-phosphate as a cofactor.

The protein resides in the cytoplasm. The enzyme catalyses (6R)-5,10-methylene-5,6,7,8-tetrahydrofolate + glycine + H2O = (6S)-5,6,7,8-tetrahydrofolate + L-serine. It participates in one-carbon metabolism; tetrahydrofolate interconversion. The protein operates within amino-acid biosynthesis; glycine biosynthesis; glycine from L-serine: step 1/1. Its function is as follows. Catalyzes the reversible interconversion of serine and glycine with tetrahydrofolate (THF) serving as the one-carbon carrier. This reaction serves as the major source of one-carbon groups required for the biosynthesis of purines, thymidylate, methionine, and other important biomolecules. Also exhibits THF-independent aldolase activity toward beta-hydroxyamino acids, producing glycine and aldehydes, via a retro-aldol mechanism. In Xanthomonas campestris pv. campestris (strain 8004), this protein is Serine hydroxymethyltransferase.